The following is a 787-amino-acid chain: Pyridoxal-dependent decarboxylase domain-containing protein 1 (787 aa).

A compositionally biased stretch (basic and acidic residues) spans Met26–Ser44. Residues Met26–Gln52 form a disordered region. The residue at position 652 (Ser652) is a Phosphoserine. Positions Gln682–Arg787 are disordered. Phosphothreonine occurs at positions 687 and 691. Residues Ser710, Ser718, Ser722, and Ser748 each carry the phosphoserine modification. Residues His725 to Ser748 show a composition bias toward basic and acidic residues. Polar residues predominate over residues Thr759 to Gln771. Positions His772 to Arg787 are enriched in basic and acidic residues. Position 778 is a phosphoserine (Ser778).

Belongs to the group II decarboxylase family. Pyridoxal 5'-phosphate is required as a cofactor.

The polypeptide is Pyridoxal-dependent decarboxylase domain-containing protein 1 (Pdxdc1) (Mus musculus (Mouse)).